The chain runs to 1714 residues: Protein ESSENTIAL FOR POTEXVIRUS ACCUMULATION 1 (1714 aa).

Disordered stretches follow at residues 1-296 (MANS…PPHL) and 358-511 (IVSS…SKGE). A Phosphoserine modification is found at serine 39. A compositionally biased stretch (polar residues) spans 58 to 75 (DPNQYGNHSDVVRTTGNG). Composition is skewed to basic and acidic residues over residues 96–136 (ESGR…DRWD) and 143–203 (GEQR…REKG). 2 stretches are compositionally biased toward polar residues: residues 230–244 (HNQS…SFSH) and 268–278 (IFTSAPNQSHP). Basic and acidic residues-rich tracts occupy residues 389-422 (GSRE…EASH) and 430-441 (RGNEAPVRELKE). Positions 444 to 463 (MQGNAHVQSASPWRQSSGGE) are enriched in polar residues. A compositionally biased stretch (basic and acidic residues) spans 464–483 (RSNRNSHDWNDPSADSRLKS). Residues 546 to 597 (ELSLYYKDPQGLIQGPFSGSDIIGWFEAGYFGIDLLVRLASAPNDSPFSLLG) form the GYF domain. 3 disordered regions span residues 728–753 (ESAN…PSSD), 1092–1205 (VKNN…KPAP), and 1437–1566 (QEKM…GKKE). A compositionally biased stretch (polar residues) spans 737 to 753 (ENVSENAQQPTRSPSSD). Positions 1142 to 1162 (SEIKGKTKKSADTLIDNDTHL) are enriched in basic and acidic residues. Polar residues predominate over residues 1163–1180 (IKSSTATASNTSQMSSEV). Residues 1467–1488 (ASWSRSASSPSQAVSQSSSQSK) show a composition bias toward low complexity. Over residues 1515-1544 (LTSQNSWGTKNTPGKVNAGTSLNRQKSVSM) the composition is skewed to polar residues.

As to quaternary structure, associates with eIF4E initiation factors and the ribosome complex, thus likely contributing to the proper translation of target proteins. Interacts directly with RPL18B and eIF4E1. Binds to SMG7. In terms of processing, quickly phosphorylated at Ser-39 after treatment of seedlings with the pathogen-associated molecular pattern (PAMP) flg22. As to expression, expressed in all tissues, mostly in flowers, leaves and stems, and, to a lower extent, in roots (at protein level).

It localises to the cytoplasm. The protein resides in the cytosol. Its subcellular location is the P-body. Its function is as follows. Translational repressor involved in the negative regulation of immune receptor accumulation via the inhibition of nucleotide-binding leucine-rich repeat (NLR) receptor mediated defense. Represses NLR protein accumulation (e.g. SNC1, RPS4, RPM1 and RPS2). Together with SMG7, helps to restrict effector-triggered immunity (ETI) cell death induction during pathogen infection in a salicylic acid- (SA) and reactive oxygen species- (ROS) independent manner. Required for pathogen-associated molecular pattern (PAMP)-induced suppression of necrotrophic fungal (e.g. F.moniliforme) pathogen-derived mycotoxin-triggered (e.g. fumonisin B1) cell death. In terms of biological role, (Microbial infection) Required for early steps of plantago asiatica mosaic virus (PlAMV, genus Potexvirus) infection. Facilitates pathogenic growth of avirulent hemi-biotrophic bacteria P.syringae pv. tomato (Pst) DC3000 (e.g. AvrRps4 and AvrRpm1) and of the compatible oomycete H.arabidopsidis Noco2. The chain is Protein ESSENTIAL FOR POTEXVIRUS ACCUMULATION 1 from Arabidopsis thaliana (Mouse-ear cress).